The following is a 633-amino-acid chain: Threonine--tRNA ligase (633 aa).

Positions 1 to 143 are editing domain; the sequence is MRALFLHSNR…SRTIKPKKVK (143 aa). 2 catalytic regions span residues 220–515 and 221–515; these read NPLN…PVLP and PLND…PVLP. Positions 314, 365, and 488 each coordinate Zn(2+).

The protein belongs to the class-II aminoacyl-tRNA synthetase family. Homodimer. It depends on Zn(2+) as a cofactor.

It is found in the cytoplasm. The enzyme catalyses tRNA(Thr) + L-threonine + ATP = L-threonyl-tRNA(Thr) + AMP + diphosphate + H(+). Functionally, catalyzes the attachment of threonine to tRNA(Thr) in a two-step reaction: L-threonine is first activated by ATP to form Thr-AMP and then transferred to the acceptor end of tRNA(Thr). Also edits incorrectly charged L-seryl-tRNA(Thr). This chain is Threonine--tRNA ligase, found in Nanoarchaeum equitans (strain Kin4-M).